Reading from the N-terminus, the 545-residue chain is Glucose-6-phosphate isomerase (545 aa).

Catalysis depends on Glu353, which acts as the Proton donor. Residues His384 and Lys510 contribute to the active site.

It belongs to the GPI family.

The protein resides in the cytoplasm. The catalysed reaction is alpha-D-glucose 6-phosphate = beta-D-fructose 6-phosphate. Its pathway is carbohydrate biosynthesis; gluconeogenesis. It participates in carbohydrate degradation; glycolysis; D-glyceraldehyde 3-phosphate and glycerone phosphate from D-glucose: step 2/4. In terms of biological role, catalyzes the reversible isomerization of glucose-6-phosphate to fructose-6-phosphate. In Aromatoleum aromaticum (strain DSM 19018 / LMG 30748 / EbN1) (Azoarcus sp. (strain EbN1)), this protein is Glucose-6-phosphate isomerase.